We begin with the raw amino-acid sequence, 506 residues long: Cysteine--tRNA ligase (506 aa).

Residue cysteine 34 coordinates Zn(2+). A 'HIGH' region motif is present at residues 36–46; that stretch reads PTVYDFAHIGN. 3 residues coordinate Zn(2+): cysteine 230, histidine 269, and glutamate 273. Positions 302–306 match the 'KMSKS' region motif; that stretch reads KMSKS. Lysine 305 lines the ATP pocket.

Belongs to the class-I aminoacyl-tRNA synthetase family. As to quaternary structure, monomer. Zn(2+) is required as a cofactor.

It is found in the cytoplasm. It carries out the reaction tRNA(Cys) + L-cysteine + ATP = L-cysteinyl-tRNA(Cys) + AMP + diphosphate. This Brucella suis (strain ATCC 23445 / NCTC 10510) protein is Cysteine--tRNA ligase.